A 124-amino-acid chain; its full sequence is MAIAKAEILESIANMTVLELSELIKEMEEKFGVSAAAATVAVAAAPAAAAAVEEQTEFSVILTAAGDNKVNVIKVVRAVTGLGLKEAKDLVDGAPKTVKEGISKEDAESLKKQLVEAGAGCEIK.

Belongs to the bacterial ribosomal protein bL12 family. In terms of assembly, homodimer. Part of the ribosomal stalk of the 50S ribosomal subunit. Forms a multimeric L10(L12)X complex, where L10 forms an elongated spine to which 2 to 4 L12 dimers bind in a sequential fashion. Binds GTP-bound translation factors.

Its function is as follows. Forms part of the ribosomal stalk which helps the ribosome interact with GTP-bound translation factors. Is thus essential for accurate translation. This is Large ribosomal subunit protein bL12 from Nitrosomonas europaea (strain ATCC 19718 / CIP 103999 / KCTC 2705 / NBRC 14298).